The following is a 415-amino-acid chain: Stimulator of interferon genes protein (415 aa).

Positions 29-163 constitute a TIR domain; the sequence is HVYHAFISYC…DIIQAISKPE (135 aa). Glutamate 104 is an active-site residue. A 2',3'-cGAMP-binding site is contributed by arginine 256. Residues 387–415 form a disordered region; it reads KSPSSTNMVKSEPNIYREESGKTKSVERG. Residues 401-415 are compositionally biased toward basic and acidic residues; sequence IYREESGKTKSVERG.

In the N-terminal section; belongs to the Toll-like receptor family. This sequence in the C-terminal section; belongs to the TMEM173 family. As to quaternary structure, homodimer.

The enzyme catalyses NAD(+) + H2O = ADP-D-ribose + nicotinamide + H(+). In terms of biological role, sensor of cytosolic DNA from bacteria and viruses that promotes autophagy. Binds c-di-AMP, 2'3'-cGAMP, 3'3'-cGAMP and to a lesser extent c-di-GMP. Nucleotide binding has not been seen to stimulate NAD(+) hydrolase activity. The protein is Stimulator of interferon genes protein of Magallana gigas (Pacific oyster).